The following is a 181-amino-acid chain: Adenylyl-sulfate kinase (181 aa).

Residue G20–S27 coordinates ATP. S94 acts as the Phosphoserine intermediate in catalysis.

This sequence belongs to the APS kinase family.

The enzyme catalyses adenosine 5'-phosphosulfate + ATP = 3'-phosphoadenylyl sulfate + ADP + H(+). The protein operates within sulfur metabolism; hydrogen sulfide biosynthesis; sulfite from sulfate: step 2/3. Functionally, catalyzes the synthesis of activated sulfate. In Deinococcus deserti (strain DSM 17065 / CIP 109153 / LMG 22923 / VCD115), this protein is Adenylyl-sulfate kinase.